The following is a 285-amino-acid chain: Urease accessory protein UreD (285 aa).

The protein belongs to the UreD family. As to quaternary structure, ureD, UreF and UreG form a complex that acts as a GTP-hydrolysis-dependent molecular chaperone, activating the urease apoprotein by helping to assemble the nickel containing metallocenter of UreC. The UreE protein probably delivers the nickel.

It localises to the cytoplasm. In terms of biological role, required for maturation of urease via the functional incorporation of the urease nickel metallocenter. The chain is Urease accessory protein UreD from Methylobacillus flagellatus (strain ATCC 51484 / DSM 6875 / VKM B-1610 / KT).